Here is a 161-residue protein sequence, read N- to C-terminus: MLAEPETWVAIAFLLLMGVFAYVGVHRTVLSALDRRSARIKNELDDARRLKDEAAKLLADYKARHASAEREAQDIIASARAEAERIAAEAKAKMEDFVARRTKSAEGKIASAEAQAIADVRAAAADAAVAAASSILSNSVKGQLADELLVQGVSEVRSKLN.

The helical transmembrane segment at Pro-5–Val-25 threads the bilayer.

This sequence belongs to the ATPase B chain family. F-type ATPases have 2 components, F(1) - the catalytic core - and F(0) - the membrane proton channel. F(1) has five subunits: alpha(3), beta(3), gamma(1), delta(1), epsilon(1). F(0) has three main subunits: a(1), b(2) and c(10-14). The alpha and beta chains form an alternating ring which encloses part of the gamma chain. F(1) is attached to F(0) by a central stalk formed by the gamma and epsilon chains, while a peripheral stalk is formed by the delta and b chains.

Its subcellular location is the cell inner membrane. Its function is as follows. F(1)F(0) ATP synthase produces ATP from ADP in the presence of a proton or sodium gradient. F-type ATPases consist of two structural domains, F(1) containing the extramembraneous catalytic core and F(0) containing the membrane proton channel, linked together by a central stalk and a peripheral stalk. During catalysis, ATP synthesis in the catalytic domain of F(1) is coupled via a rotary mechanism of the central stalk subunits to proton translocation. Functionally, component of the F(0) channel, it forms part of the peripheral stalk, linking F(1) to F(0). This chain is ATP synthase subunit b 1, found in Nitrobacter winogradskyi (strain ATCC 25391 / DSM 10237 / CIP 104748 / NCIMB 11846 / Nb-255).